Reading from the N-terminus, the 303-residue chain is Putative S-adenosyl-L-methionine-dependent methyltransferase SCO6443 (303 aa).

S-adenosyl-L-methionine contacts are provided by residues Asp-130 and 159-160 (DL).

It belongs to the UPF0677 family.

In terms of biological role, exhibits S-adenosyl-L-methionine-dependent methyltransferase activity. This is Putative S-adenosyl-L-methionine-dependent methyltransferase SCO6443 from Streptomyces coelicolor (strain ATCC BAA-471 / A3(2) / M145).